Consider the following 503-residue polypeptide: Aspartyl/glutamyl-tRNA(Asn/Gln) amidotransferase subunit B (503 aa).

It belongs to the GatB/GatE family. GatB subfamily. In terms of assembly, heterotrimer of A, B and C subunits.

The enzyme catalyses L-glutamyl-tRNA(Gln) + L-glutamine + ATP + H2O = L-glutaminyl-tRNA(Gln) + L-glutamate + ADP + phosphate + H(+). The catalysed reaction is L-aspartyl-tRNA(Asn) + L-glutamine + ATP + H2O = L-asparaginyl-tRNA(Asn) + L-glutamate + ADP + phosphate + 2 H(+). Functionally, allows the formation of correctly charged Asn-tRNA(Asn) or Gln-tRNA(Gln) through the transamidation of misacylated Asp-tRNA(Asn) or Glu-tRNA(Gln) in organisms which lack either or both of asparaginyl-tRNA or glutaminyl-tRNA synthetases. The reaction takes place in the presence of glutamine and ATP through an activated phospho-Asp-tRNA(Asn) or phospho-Glu-tRNA(Gln). The protein is Aspartyl/glutamyl-tRNA(Asn/Gln) amidotransferase subunit B of Rhodococcus jostii (strain RHA1).